A 1261-amino-acid polypeptide reads, in one-letter code: SNF2 domain-containing protein CLASSY 2 (1261 aa).

A disordered region spans residues Phe458–Pro479. Residues Asp704 to Lys904 form the Helicase ATP-binding domain. His717–Thr724 is a binding site for ATP. A DEAH box motif is present at residues Asp855–His858. In terms of domain architecture, Helicase C-terminal spans Phe1067–Ile1232.

Belongs to the helicase family. Interacts with NRPD1 and SHH1.

The protein resides in the nucleus. In terms of biological role, probable chromatin remodeling factor. The polypeptide is SNF2 domain-containing protein CLASSY 2 (CLSY2) (Arabidopsis thaliana (Mouse-ear cress)).